The following is a 351-amino-acid chain: MENDNFVVLKNVCKRFGDNTVINNLDLEIKKGSLVTLLGPSGCGKTTVLRLVAGLEKPTSGQIFIDGEDVTNTSIQQRDICMVFQSYALFPHLSLYDNVGYGLKMLKLPAAEIKQRVDDALKLVDLSGMGDRFVDQISGGQQQRIALARALVLKPKVLLFDEPLSNLDANLRRSMRETIRDLQQRFNITSLYVTHDQTEAFAVSDTVIVMKDGEIMQQGSPDDLYKTPSSMFMANFMGDANIFTGRYDDGQLNINGYCIPADPEVVQGKAEGDYQIGVRPEAILLTSEGEPSQQCIVNNVVYMGSMYEVAVTWHDQELLLQLNSSQFDANLSDHAYLTINPTGIFLLPFDA.

The 231-residue stretch at 7-237 folds into the ABC transporter domain; sequence VVLKNVCKRF…PSSMFMANFM (231 aa). 39–46 contacts ATP; the sequence is GPSGCGKT.

It belongs to the ABC transporter superfamily. Fe(3+) ion importer (TC 3.A.1.10) family. The complex is composed of two ATP-binding proteins (FbpC), two transmembrane proteins (FbpB) and a solute-binding protein (FbpA).

The protein localises to the cell inner membrane. It catalyses the reaction Fe(3+)(out) + ATP + H2O = Fe(3+)(in) + ADP + phosphate + H(+). Its function is as follows. Part of the ABC transporter complex FbpABC involved in Fe(3+) ions import. Responsible for energy coupling to the transport system. The chain is Fe(3+) ions import ATP-binding protein FbpC from Photobacterium profundum (strain SS9).